A 529-amino-acid chain; its full sequence is Peptide chain release factor 3 (529 aa).

Positions 11-280 (ATRRTFAIIS…GLVQWAPPPQ (270 aa)) constitute a tr-type G domain. GTP-binding positions include 20-27 (SHPDAGKT), 88-92 (DTPGH), and 142-145 (NKLD).

This sequence belongs to the TRAFAC class translation factor GTPase superfamily. Classic translation factor GTPase family. PrfC subfamily.

The protein resides in the cytoplasm. In terms of biological role, increases the formation of ribosomal termination complexes and stimulates activities of RF-1 and RF-2. It binds guanine nucleotides and has strong preference for UGA stop codons. It may interact directly with the ribosome. The stimulation of RF-1 and RF-2 is significantly reduced by GTP and GDP, but not by GMP. The polypeptide is Peptide chain release factor 3 (Alcanivorax borkumensis (strain ATCC 700651 / DSM 11573 / NCIMB 13689 / SK2)).